We begin with the raw amino-acid sequence, 496 residues long: Iroquois-class homeodomain protein irx-4-A (496 aa).

The homeobox; TALE-type DNA-binding region spans 141 to 203; sequence GSSRRKNATR…NARRRLKKEN (63 aa). Positions 203–246 are disordered; sequence NKMTWPPRNKCSDEKRPYDEEEEEEEEEEDSQKATIKNEKKTVD. Residues 221 to 232 show a composition bias toward acidic residues; that stretch reads DEEEEEEEEEED.

The protein belongs to the TALE/IRO homeobox family. Expressed in the neural plate in overlapping patterns with other irx members, which all share an anterior border of expression. At stage 20, expressed in a subset of cells in the developing hindbrain with expression appearing above the otic vesicle by stage 26. Expression in retina cells begins at stage 28, continuing at later stages and is limited to a subset of retinal cells of the optic cup. Also expressed in the ventricle of the heart from stage 36 (late tailbud) onwards. Only expressed in the pronephros at tadpole stage.

The protein resides in the nucleus. Functionally, acts partially redundantly with other irx members in neural patterning. Required for formation of the posterior forebrain, midbrain, hindbrain, and to a lesser extent, spinal cord. Patterns the neuroectoderm in both the anterior/posterior and dorsal/ventral axes. Does not appear to play a role in pronephros kidney development. In Xenopus laevis (African clawed frog), this protein is Iroquois-class homeodomain protein irx-4-A (irx4-a).